The following is a 138-amino-acid chain: Gastrula zinc finger protein XlCGF44.2 (138 aa).

5 C2H2-type zinc fingers span residues 5-27 (FACTKCKRRFCSNKELFSHKRIH), 32-54 (FVCAVCGKYFSDRIILQAHQRLH), 60-82 (FTCTQCHKSFLYKRNLHQHQQIH), 88-110 (YVCSTCGKQLKSKLTLNQHMKTH), and 116-138 (FACSECSKSFRFKAHLHRHQESH).

It belongs to the krueppel C2H2-type zinc-finger protein family.

The protein resides in the nucleus. May be involved in transcriptional regulation. This Xenopus laevis (African clawed frog) protein is Gastrula zinc finger protein XlCGF44.2.